The sequence spans 458 residues: Cysteine protease ATG4C (458 aa).

Position 1 is an N-acetylmethionine (M1). The active-site Nucleophile is the C111. Residues D345 and H347 contribute to the active site. S451 carries the post-translational modification Phosphoserine. T452 carries the phosphothreonine modification.

This sequence belongs to the peptidase C54 family.

The protein resides in the cytoplasm. It catalyses the reaction [protein]-C-terminal L-amino acid-glycyl-phosphatidylethanolamide + H2O = [protein]-C-terminal L-amino acid-glycine + a 1,2-diacyl-sn-glycero-3-phosphoethanolamine. Its activity is regulated as follows. Inhibited by N-ethylmaleimide. Functionally, cysteine protease that plays a key role in autophagy by mediating both proteolytic activation and delipidation of ATG8 family proteins. The protease activity is required for proteolytic activation of ATG8 family proteins: cleaves the C-terminal amino acid of ATG8 proteins MAP1LC3 and GABARAPL2, to reveal a C-terminal glycine. Exposure of the glycine at the C-terminus is essential for ATG8 proteins conjugation to phosphatidylethanolamine (PE) and insertion to membranes, which is necessary for autophagy. In addition to the protease activity, also mediates delipidation of ATG8 family proteins. Catalyzes delipidation of PE-conjugated forms of ATG8 proteins during macroautophagy. Compared to ATG4B, the major protein for proteolytic activation of ATG8 proteins, shows weaker ability to cleave the C-terminal amino acid of ATG8 proteins, while it displays stronger delipidation activity. In contrast to other members of the family, weakly or not involved in phagophore growth during mitophagy. The polypeptide is Cysteine protease ATG4C (Homo sapiens (Human)).